The sequence spans 195 residues: Protein GrpE (195 aa).

A disordered region spans residues Met-1 to Glu-30. Acidic residues predominate over residues Glu-10 to Asn-20.

This sequence belongs to the GrpE family. In terms of assembly, homodimer.

The protein localises to the cytoplasm. Participates actively in the response to hyperosmotic and heat shock by preventing the aggregation of stress-denatured proteins, in association with DnaK and GrpE. It is the nucleotide exchange factor for DnaK and may function as a thermosensor. Unfolded proteins bind initially to DnaJ; upon interaction with the DnaJ-bound protein, DnaK hydrolyzes its bound ATP, resulting in the formation of a stable complex. GrpE releases ADP from DnaK; ATP binding to DnaK triggers the release of the substrate protein, thus completing the reaction cycle. Several rounds of ATP-dependent interactions between DnaJ, DnaK and GrpE are required for fully efficient folding. This chain is Protein GrpE, found in Histophilus somni (strain 2336) (Haemophilus somnus).